The chain runs to 167 residues: Bacterial non-heme ferritin (167 aa).

The Ferritin-like diiron domain maps to 1–145 (MLSKEVVKLL…GIVDKIKLIG (145 aa)). 5 residues coordinate Fe cation: Glu-17, Glu-50, His-53, Glu-94, and Gln-127.

It belongs to the ferritin family. Prokaryotic subfamily. Homooligomer of 24 subunits that assemble into a spherical protein shell (12 +/- 1 nM diameter) that can sequester at least 2000 iron atoms.

Its subcellular location is the cytoplasm. It catalyses the reaction 4 Fe(2+) + O2 + 6 H2O = 4 iron(III) oxide-hydroxide + 12 H(+). Its function is as follows. Iron-storage protein. In Campylobacter jejuni subsp. jejuni serotype O:2 (strain ATCC 700819 / NCTC 11168), this protein is Bacterial non-heme ferritin (ftn).